The following is a 250-amino-acid chain: Envelope glycoprotein L (250 aa).

A signal peptide spans 1 to 18 (MELLLFVMSLILLTFSKA). The gL betaherpesvirus-type domain maps to 31 to 239 (KLDDCIAAVI…ETYNSKLPFR (209 aa)). C136 and C141 form a disulfide bridge.

This sequence belongs to the herpesviridae glycoprotein L (gL) family. Betaherpesvirinae gL subfamily. Interacts with glycoprotein H (gH); this interaction is necessary for the correct processing and cell surface expression of gH. Part of a gH-gL-gO complex.

The protein resides in the virion membrane. It is found in the host cell membrane. The protein localises to the host Golgi apparatus. Its subcellular location is the host trans-Golgi network. The heterodimer glycoprotein H-glycoprotein L is required for the fusion of viral and plasma membranes leading to virus entry into the host cell. Acts as a functional inhibitor of gH and maintains gH in an inhibited form. Upon binding to host integrins, gL dissociates from gH leading to activation of the viral fusion glycoproteins gB and gH. In Human herpesvirus 6A (strain Uganda-1102) (HHV-6 variant A), this protein is Envelope glycoprotein L.